The primary structure comprises 347 residues: Protein RecA (347 aa).

65–72 (GPESSGKT) contacts ATP. Basic and acidic residues predominate over residues 327–336 (KFEPTELSRE). Residues 327–347 (KFEPTELSREEGDEDTLEDAM) are disordered. Over residues 337-347 (EGDEDTLEDAM) the composition is skewed to acidic residues.

Belongs to the RecA family.

It localises to the cytoplasm. Its function is as follows. Can catalyze the hydrolysis of ATP in the presence of single-stranded DNA, the ATP-dependent uptake of single-stranded DNA by duplex DNA, and the ATP-dependent hybridization of homologous single-stranded DNAs. It interacts with LexA causing its activation and leading to its autocatalytic cleavage. The protein is Protein RecA of Xylella fastidiosa (strain M23).